A 137-amino-acid chain; its full sequence is Basic phospholipase A2 homolog 4a (137 aa).

Residues 1–16 form the signal peptide; sequence MRTLWIVTVLLVGVEG. 7 disulfide bridges follow: Cys42-Cys131, Cys44-Cys60, Cys59-Cys111, Cys65-Cys137, Cys66-Cys104, Cys73-Cys97, and Cys91-Cys102. The segment at 121-133 is important for membrane-damaging activities in eukaryotes and bacteria; heparin-binding; it reads KKYKIYPKFFCKK.

This sequence belongs to the phospholipase A2 family. Group II subfamily. K49 sub-subfamily. Homodimer; non-covalently linked. In terms of tissue distribution, expressed by the venom gland.

Its subcellular location is the secreted. In terms of biological role, snake venom phospholipase A2 homolog that lacks enzymatic activity. Is myotoxic and displays edema-inducing activities. A model of myotoxic mechanism has been proposed: an apo Lys49-PLA2 is activated by the entrance of a hydrophobic molecule (e.g. fatty acid) at the hydrophobic channel of the protein leading to a reorientation of a monomer. This reorientation causes a transition between 'inactive' to 'active' states, causing alignment of C-terminal and membrane-docking sites (MDoS) side-by-side and putting the membrane-disruption sites (MDiS) in the same plane, exposed to solvent and in a symmetric position for both monomers. The MDoS region stabilizes the toxin on membrane by the interaction of charged residues with phospholipid head groups. Subsequently, the MDiS region destabilizes the membrane with penetration of hydrophobic residues. This insertion causes a disorganization of the membrane, allowing an uncontrolled influx of ions (i.e. calcium and sodium), and eventually triggering irreversible intracellular alterations and cell death. This is Basic phospholipase A2 homolog 4a from Bothrops asper (Terciopelo).